A 205-amino-acid polypeptide reads, in one-letter code: Thymidine kinase (205 aa).

ATP-binding positions include 9-16 (SAMNAGKS) and 87-90 (DECQ). Glu88 acts as the Proton acceptor in catalysis. Residues Cys145, Cys147, Cys182, and His185 each coordinate Zn(2+).

The protein belongs to the thymidine kinase family. Homotetramer.

Its subcellular location is the cytoplasm. The catalysed reaction is thymidine + ATP = dTMP + ADP + H(+). Allosteric enzyme which is feedback inhibited by dTTP and activated by a number of dNDP and dNTP. Functionally, phosphorylates both thymidine and deoxyuridine. The polypeptide is Thymidine kinase (Escherichia coli (strain K12)).